Reading from the N-terminus, the 490-residue chain is Bifunctional protein HldE (490 aa).

Positions 1–330 (MDRTNIENFL…EAMAHHALEY (330 aa)) are ribokinase. 205–208 (NRKE) contacts ATP. Aspartate 275 is a catalytic residue. Residues 356 to 490 (FTNGCFDLLH…ERILDRYEQG (135 aa)) form a cytidylyltransferase region.

The protein in the N-terminal section; belongs to the carbohydrate kinase PfkB family. This sequence in the C-terminal section; belongs to the cytidylyltransferase family. Homodimer.

The enzyme catalyses D-glycero-beta-D-manno-heptose 7-phosphate + ATP = D-glycero-beta-D-manno-heptose 1,7-bisphosphate + ADP + H(+). It carries out the reaction D-glycero-beta-D-manno-heptose 1-phosphate + ATP + H(+) = ADP-D-glycero-beta-D-manno-heptose + diphosphate. Its pathway is nucleotide-sugar biosynthesis; ADP-L-glycero-beta-D-manno-heptose biosynthesis; ADP-L-glycero-beta-D-manno-heptose from D-glycero-beta-D-manno-heptose 7-phosphate: step 1/4. It functions in the pathway nucleotide-sugar biosynthesis; ADP-L-glycero-beta-D-manno-heptose biosynthesis; ADP-L-glycero-beta-D-manno-heptose from D-glycero-beta-D-manno-heptose 7-phosphate: step 3/4. In terms of biological role, catalyzes the phosphorylation of D-glycero-D-manno-heptose 7-phosphate at the C-1 position to selectively form D-glycero-beta-D-manno-heptose-1,7-bisphosphate. Functionally, catalyzes the ADP transfer from ATP to D-glycero-beta-D-manno-heptose 1-phosphate, yielding ADP-D-glycero-beta-D-manno-heptose. This Syntrophotalea carbinolica (strain DSM 2380 / NBRC 103641 / GraBd1) (Pelobacter carbinolicus) protein is Bifunctional protein HldE.